We begin with the raw amino-acid sequence, 81 residues long: Photosystem I iron-sulfur center (81 aa).

2 4Fe-4S ferredoxin-type domains span residues 2 to 31 (AHSV…MVPW) and 39 to 68 (IASA…VRVY). Residues cysteine 11, cysteine 14, cysteine 17, cysteine 21, cysteine 48, cysteine 51, cysteine 54, and cysteine 58 each coordinate [4Fe-4S] cluster.

In terms of assembly, the eukaryotic PSI reaction center is composed of at least 11 subunits. [4Fe-4S] cluster is required as a cofactor.

It is found in the plastid. The protein resides in the chloroplast thylakoid membrane. It carries out the reaction reduced [plastocyanin] + hnu + oxidized [2Fe-2S]-[ferredoxin] = oxidized [plastocyanin] + reduced [2Fe-2S]-[ferredoxin]. Its function is as follows. Apoprotein for the two 4Fe-4S centers FA and FB of photosystem I (PSI); essential for photochemical activity. FB is the terminal electron acceptor of PSI, donating electrons to ferredoxin. The C-terminus interacts with PsaA/B/D and helps assemble the protein into the PSI complex. Required for binding of PsaD and PsaE to PSI. PSI is a plastocyanin-ferredoxin oxidoreductase, converting photonic excitation into a charge separation, which transfers an electron from the donor P700 chlorophyll pair to the spectroscopically characterized acceptors A0, A1, FX, FA and FB in turn. This is Photosystem I iron-sulfur center from Gnetum parvifolium (Small-leaved jointfir).